Here is a 229-residue protein sequence, read N- to C-terminus: 2,3-bisphosphoglycerate-dependent phosphoglycerate mutase (229 aa).

Residues 7–14, 20–21, arginine 59, 86–89, lysine 97, 113–114, and 182–183 each bind substrate; these read RHGQSEWN, TG, ERHY, RR, and GN. Histidine 8 acts as the Tele-phosphohistidine intermediate in catalysis. The active-site Proton donor/acceptor is the glutamate 86.

It belongs to the phosphoglycerate mutase family. BPG-dependent PGAM subfamily.

The catalysed reaction is (2R)-2-phosphoglycerate = (2R)-3-phosphoglycerate. Its pathway is carbohydrate degradation; glycolysis; pyruvate from D-glyceraldehyde 3-phosphate: step 3/5. Functionally, catalyzes the interconversion of 2-phosphoglycerate and 3-phosphoglycerate. The polypeptide is 2,3-bisphosphoglycerate-dependent phosphoglycerate mutase (Listeria monocytogenes serovar 1/2a (strain ATCC BAA-679 / EGD-e)).